Reading from the N-terminus, the 224-residue chain is Ribonuclease HII (224 aa).

Residues 21–223 (RAIAGIDEAG…IRNAALEGEQ (203 aa)) form the RNase H type-2 domain. Aspartate 27, glutamate 28, and aspartate 124 together coordinate a divalent metal cation.

It belongs to the RNase HII family. Mn(2+) is required as a cofactor. The cofactor is Mg(2+).

Its subcellular location is the cytoplasm. The enzyme catalyses Endonucleolytic cleavage to 5'-phosphomonoester.. In terms of biological role, endonuclease that specifically degrades the RNA of RNA-DNA hybrids. The sequence is that of Ribonuclease HII from Roseiflexus castenholzii (strain DSM 13941 / HLO8).